Consider the following 207-residue polypeptide: Uracil phosphoribosyltransferase (207 aa).

5-phospho-alpha-D-ribose 1-diphosphate contacts are provided by residues Arg77, Arg102, and 129–137 (DPMLATGGS). Uracil contacts are provided by residues Ile192 and 197–199 (GDA). A 5-phospho-alpha-D-ribose 1-diphosphate-binding site is contributed by Asp198.

This sequence belongs to the UPRTase family. The cofactor is Mg(2+).

The enzyme catalyses UMP + diphosphate = 5-phospho-alpha-D-ribose 1-diphosphate + uracil. It participates in pyrimidine metabolism; UMP biosynthesis via salvage pathway; UMP from uracil: step 1/1. Its activity is regulated as follows. Allosterically activated by GTP. In terms of biological role, catalyzes the conversion of uracil and 5-phospho-alpha-D-ribose 1-diphosphate (PRPP) to UMP and diphosphate. The sequence is that of Uracil phosphoribosyltransferase from Dictyoglomus thermophilum (strain ATCC 35947 / DSM 3960 / H-6-12).